Consider the following 175-residue polypeptide: Transcriptional repressor NrdR (175 aa).

Residues 3–32 fold into a zinc finger; that stretch reads CPYCSHPDTKVIDSRDVDDGVRRRRECVVC. One can recognise an ATP-cone domain in the interval 47–137; that stretch reads LFVVKKDQRR…VYREFTDITQ (91 aa).

This sequence belongs to the NrdR family. Zn(2+) is required as a cofactor.

Negatively regulates transcription of bacterial ribonucleotide reductase nrd genes and operons by binding to NrdR-boxes. This chain is Transcriptional repressor NrdR, found in Dehalococcoides mccartyi (strain ATCC BAA-2266 / KCTC 15142 / 195) (Dehalococcoides ethenogenes (strain 195)).